We begin with the raw amino-acid sequence, 565 residues long: Dihydroxy-acid dehydratase (565 aa).

Asp83 is a Mg(2+) binding site. Cys124 lines the [2Fe-2S] cluster pocket. 2 residues coordinate Mg(2+): Asp125 and Lys126. Position 126 is an N6-carboxylysine (Lys126). A [2Fe-2S] cluster-binding site is contributed by Cys197. Glu451 is a Mg(2+) binding site. The active-site Proton acceptor is Ser477.

This sequence belongs to the IlvD/Edd family. Homodimer. The cofactor is [2Fe-2S] cluster. Mg(2+) serves as cofactor.

It catalyses the reaction (2R)-2,3-dihydroxy-3-methylbutanoate = 3-methyl-2-oxobutanoate + H2O. The catalysed reaction is (2R,3R)-2,3-dihydroxy-3-methylpentanoate = (S)-3-methyl-2-oxopentanoate + H2O. The protein operates within amino-acid biosynthesis; L-isoleucine biosynthesis; L-isoleucine from 2-oxobutanoate: step 3/4. It participates in amino-acid biosynthesis; L-valine biosynthesis; L-valine from pyruvate: step 3/4. Functions in the biosynthesis of branched-chain amino acids. Catalyzes the dehydration of (2R,3R)-2,3-dihydroxy-3-methylpentanoate (2,3-dihydroxy-3-methylvalerate) into 2-oxo-3-methylpentanoate (2-oxo-3-methylvalerate) and of (2R)-2,3-dihydroxy-3-methylbutanoate (2,3-dihydroxyisovalerate) into 2-oxo-3-methylbutanoate (2-oxoisovalerate), the penultimate precursor to L-isoleucine and L-valine, respectively. The polypeptide is Dihydroxy-acid dehydratase (Symbiobacterium thermophilum (strain DSM 24528 / JCM 14929 / IAM 14863 / T)).